Here is a 457-residue protein sequence, read N- to C-terminus: MYNCAIILAAGKGKRMKSSMPKVVHKVCGKEMVNHVIDNVRKANIKDVNLVIGKGSETVKEHTKDRNVTYSMQEEQLGTGHAVICAEEFLKDKKGTVAIFTGDAPLITNETIQQLFEFHNSGKYAATLISSTVQDPTGYGRIIREASGEVKKIVEHKDCNEEELKVNEINSGMYCFDIEVLLNSLKNLNNDNSQGEYYLTDVIEITKKSGDKVGAIVVPYEEIMGVNSRVQLSEAEIVMRKRINHKHMVNGVTFIDCESTYIDVDVEIGNDTIIYPGCVIQGNTTIKEGCTLYSNSRICNSVIGSGVIVENSVILESHVGEGTTVGPFAYIRPETKIGKSARIGDFVEIKKSTIGDNTKVSHLTYIGDAEVGSKCNFGCGTVVVNYDGQRKQKTIIGNNAFIGCNTNLISPVKVNDNTYIAAGSTITNEVPEGSLAIARSKQINKEGWLDKKGLLKK.

The interval 1–229 is pyrophosphorylase; that stretch reads MYNCAIILAA…YEEIMGVNSR (229 aa). UDP-N-acetyl-alpha-D-glucosamine-binding positions include 8 to 11, K22, Q73, and 78 to 79; these read LAAG and GT. D103 contacts Mg(2+). The UDP-N-acetyl-alpha-D-glucosamine site is built by G140, E155, N170, and N227. N227 contacts Mg(2+). Residues 230–250 are linker; that stretch reads VQLSEAEIVMRKRINHKHMVN. An N-acetyltransferase region spans residues 251–457; the sequence is GVTFIDCEST…WLDKKGLLKK (207 aa). UDP-N-acetyl-alpha-D-glucosamine contacts are provided by R332 and K350. The Proton acceptor role is filled by H362. Residues Y365 and N376 each contribute to the UDP-N-acetyl-alpha-D-glucosamine site. Residues 385–386, A422, and R439 each bind acetyl-CoA; that span reads NY.

It in the N-terminal section; belongs to the N-acetylglucosamine-1-phosphate uridyltransferase family. This sequence in the C-terminal section; belongs to the transferase hexapeptide repeat family. Homotrimer. Requires Mg(2+) as cofactor.

The protein resides in the cytoplasm. The enzyme catalyses alpha-D-glucosamine 1-phosphate + acetyl-CoA = N-acetyl-alpha-D-glucosamine 1-phosphate + CoA + H(+). The catalysed reaction is N-acetyl-alpha-D-glucosamine 1-phosphate + UTP + H(+) = UDP-N-acetyl-alpha-D-glucosamine + diphosphate. Its pathway is nucleotide-sugar biosynthesis; UDP-N-acetyl-alpha-D-glucosamine biosynthesis; N-acetyl-alpha-D-glucosamine 1-phosphate from alpha-D-glucosamine 6-phosphate (route II): step 2/2. It functions in the pathway nucleotide-sugar biosynthesis; UDP-N-acetyl-alpha-D-glucosamine biosynthesis; UDP-N-acetyl-alpha-D-glucosamine from N-acetyl-alpha-D-glucosamine 1-phosphate: step 1/1. It participates in bacterial outer membrane biogenesis; LPS lipid A biosynthesis. In terms of biological role, catalyzes the last two sequential reactions in the de novo biosynthetic pathway for UDP-N-acetylglucosamine (UDP-GlcNAc). The C-terminal domain catalyzes the transfer of acetyl group from acetyl coenzyme A to glucosamine-1-phosphate (GlcN-1-P) to produce N-acetylglucosamine-1-phosphate (GlcNAc-1-P), which is converted into UDP-GlcNAc by the transfer of uridine 5-monophosphate (from uridine 5-triphosphate), a reaction catalyzed by the N-terminal domain. This Clostridium botulinum (strain Langeland / NCTC 10281 / Type F) protein is Bifunctional protein GlmU.